We begin with the raw amino-acid sequence, 270 residues long: Formamidopyrimidine-DNA glycosylase (270 aa).

The active-site Schiff-base intermediate with DNA is the proline 2. Catalysis depends on glutamate 3, which acts as the Proton donor. Lysine 58 (proton donor; for beta-elimination activity) is an active-site residue. Residues histidine 91, arginine 110, and arginine 151 each coordinate DNA. The segment at 236 to 270 (FVYGRGGQPCKVCGTELREVKLGQRASVYCPRCQR) adopts an FPG-type zinc-finger fold. Arginine 260 (proton donor; for delta-elimination activity) is an active-site residue.

It belongs to the FPG family. Monomer. The cofactor is Zn(2+).

It carries out the reaction Hydrolysis of DNA containing ring-opened 7-methylguanine residues, releasing 2,6-diamino-4-hydroxy-5-(N-methyl)formamidopyrimidine.. The catalysed reaction is 2'-deoxyribonucleotide-(2'-deoxyribose 5'-phosphate)-2'-deoxyribonucleotide-DNA = a 3'-end 2'-deoxyribonucleotide-(2,3-dehydro-2,3-deoxyribose 5'-phosphate)-DNA + a 5'-end 5'-phospho-2'-deoxyribonucleoside-DNA + H(+). In terms of biological role, involved in base excision repair of DNA damaged by oxidation or by mutagenic agents. Acts as a DNA glycosylase that recognizes and removes damaged bases. Has a preference for oxidized purines, such as 7,8-dihydro-8-oxoguanine (8-oxoG). Has AP (apurinic/apyrimidinic) lyase activity and introduces nicks in the DNA strand. Cleaves the DNA backbone by beta-delta elimination to generate a single-strand break at the site of the removed base with both 3'- and 5'-phosphates. The polypeptide is Formamidopyrimidine-DNA glycosylase (Pseudomonas putida (strain ATCC 700007 / DSM 6899 / JCM 31910 / BCRC 17059 / LMG 24140 / F1)).